Reading from the N-terminus, the 513-residue chain is MQLNPSEISELLKSRIEGLGASTDVRTQGTVVSVTDGITRIHGLSDVMQGEMLEFPNNVFGVALNLERDSVGAVVLGDYTGVSEGDQVKTTGRILEVPVGPELKGRVVNTLGDAIDGKGPINTTQTDIIEKVAPGVIARRSVSQPLQTGIKAIDSMVPIGRGQRELIIGDRQTGKTAVAVDTIISQKGKGVTCVYVAIGQKASTINNVVRKLEEHGAMEYTIVVAAAASDSAAMQYLAAYAGCTMGEYFRDRGEDALIVYDDLTKQAWAYRQVSLLLRRPPGREAYPGDVFYLHSRLLERAARVNEEYVEKFTNGAVKGKTGSLTALPIIETQAGDVSAFVPTNVISITDGQIFLETDLFNAGVRPAINAGISVSRVGGAAQTKVIKKLSGGIRTDLAQYRELAAFAQFASDLDDATRRQLERGKRVVELLKQPQYQPLQVWELAVSLYAVNNGYLDDVDVAQILAFEKSLKDHLKAKHAALIQRIEDTKELSKDDEAELAAAVQDFKKHGAF.

169–176 (GDRQTGKT) lines the ATP pocket.

Belongs to the ATPase alpha/beta chains family. As to quaternary structure, F-type ATPases have 2 components, CF(1) - the catalytic core - and CF(0) - the membrane proton channel. CF(1) has five subunits: alpha(3), beta(3), gamma(1), delta(1), epsilon(1). CF(0) has three main subunits: a(1), b(2) and c(9-12). The alpha and beta chains form an alternating ring which encloses part of the gamma chain. CF(1) is attached to CF(0) by a central stalk formed by the gamma and epsilon chains, while a peripheral stalk is formed by the delta and b chains.

The protein localises to the cell inner membrane. It carries out the reaction ATP + H2O + 4 H(+)(in) = ADP + phosphate + 5 H(+)(out). Its function is as follows. Produces ATP from ADP in the presence of a proton gradient across the membrane. The alpha chain is a regulatory subunit. The protein is ATP synthase subunit alpha of Bordetella bronchiseptica (strain ATCC BAA-588 / NCTC 13252 / RB50) (Alcaligenes bronchisepticus).